The chain runs to 243 residues: Outer membrane protein A (243 aa).

5 beta stranded membrane passes run 1–8 (LTAKLGYP), 13–21 (LDIYTRLGG), 48–57 (PVFAGGVEWA), 62–69 (IATRLEYQ), and 88–96 (LLSLGVSYR). A run of 4 repeats spans residues 107 to 108 (AP), 109 to 110 (AP), 111 to 112 (AP), and 113 to 114 (AP). A 4 X 2 AA tandem repeats of A-P region spans residues 107 to 114 (APAPAPAP). Positions 116–243 (VQTKHFTLKS…RRVEIEVKGI (128 aa)) constitute an OmpA-like domain. Cys-217 and Cys-229 form a disulfide bridge.

Belongs to the outer membrane OOP (TC 1.B.6) superfamily. OmpA family. As to quaternary structure, monomer and homodimer.

It is found in the cell outer membrane. Functionally, with TolR probably plays a role in maintaining the position of the peptidoglycan cell wall in the periplasm. Acts as a porin with low permeability that allows slow penetration of small solutes; an internal gate slows down solute passage. Required for conjugation with F-type plasmids; probably serves as the mating receptor on recipient cells. In Escherichia fergusonii, this protein is Outer membrane protein A.